The sequence spans 780 residues: MAIAYNLGKGEYKNWIISETEFNENNLPKFETIFSLGNGYMGLRAATEEHYFNETRGCYVAGMFDRFKGEVAELPNIPDYVGMEIKLDGERFNLNQGKIISYHRYLNVKDGELVREVEWQSPAGNITKLVFKRFVSLANLHLAGFKIKIIPVNYSGKVAIKTGYNGQVTNSGVQHFVEGDKRVLPDGKSYLTVRTQESGIFTIVAGKFRFLINASEINPQQQIVTGRRQLFLRSEYELKENECLEMEKCVIVYTGRDLEFKDKDIDSGDIVETALTTLDKAGTKRYEELFSEHRQKWHKLWHEIDIEIGGPDFDQLAVRFAQYHLVQMTPSHDSRISVAAKGLSGEGYKGHVFWDTEIFILPFFIYTFPQIARKLLEYRYHTLDGARKKARENGYKGAMYPWESADTGEETTPEFGEVDIKTGKPIRIWCGEIEQHITADVAYAIWHYYQVTGDKEFMYNYGTEIFMETARFWASRLEYNQGLDRYEIKDVIGPDEYSEHVNNNAYTNYMVKWHLEKAIDIYNWLSDDSRDILEKIINKIALKEDELNEWKKKKDKIYLPFQEDSKVIPQFDGFMDQDVIDISSYRGDVGAIMKAYSWDEITSSQVIKQADVVMLLYLLGEDFSHEVKEKNYHYYEPKTLHDSSLSPSIHAIMGKEIGDLDEAYRYFNKSTTIDLGRNMRSCDAGLHSASLGGIWQAVVLGFGGVKVKDNVLNIDPMLPEKWDYLNFKLKWQGMPIRVEIRNDRVSVSFLNDDKAMLKDVSVMVKGRNLQLNNNKAVVNL.

354–355 (WD) provides a ligand contact to substrate. Catalysis depends on E496, which acts as the Proton donor. 608–609 (KQ) is a substrate binding site.

The protein belongs to the glycosyl hydrolase 65 family.

It carries out the reaction kojibiose + phosphate = beta-D-glucose 1-phosphate + D-glucose. Functionally, catalyzes the reversible phosphorolysis of kojibiose into beta-D-glucose 1-phosphate (Glc1P) and D-glucose. In the reverse direction, uses Glc1P as acceptor to produce alpha-1,2-glucans up to a degree of polymerization of 6. This is Kojibiose phosphorylase from Halothermothrix orenii (strain H 168 / OCM 544 / DSM 9562).